The following is a 352-amino-acid chain: Biotin synthase (352 aa).

The Radical SAM core domain maps to 44–262; it reads NRVQVSTLLS…LAVARILMPK (219 aa). Residues Cys59, Cys63, and Cys66 each coordinate [4Fe-4S] cluster. Cys103, Cys134, Cys194, and Arg266 together coordinate [2Fe-2S] cluster.

This sequence belongs to the radical SAM superfamily. Biotin synthase family. Homodimer. The cofactor is [4Fe-4S] cluster. [2Fe-2S] cluster is required as a cofactor.

It carries out the reaction (4R,5S)-dethiobiotin + (sulfur carrier)-SH + 2 reduced [2Fe-2S]-[ferredoxin] + 2 S-adenosyl-L-methionine = (sulfur carrier)-H + biotin + 2 5'-deoxyadenosine + 2 L-methionine + 2 oxidized [2Fe-2S]-[ferredoxin]. Its pathway is cofactor biosynthesis; biotin biosynthesis; biotin from 7,8-diaminononanoate: step 2/2. In terms of biological role, catalyzes the conversion of dethiobiotin (DTB) to biotin by the insertion of a sulfur atom into dethiobiotin via a radical-based mechanism. This is Biotin synthase from Pseudomonas syringae pv. syringae (strain B728a).